Consider the following 393-residue polypeptide: Arginine biosynthesis bifunctional protein ArgJ (393 aa).

Threonine 142, lysine 168, threonine 179, glutamate 265, asparagine 388, and threonine 393 together coordinate substrate. Residue threonine 179 is the Nucleophile of the active site.

This sequence belongs to the ArgJ family. Heterotetramer of two alpha and two beta chains.

Its subcellular location is the cytoplasm. The catalysed reaction is N(2)-acetyl-L-ornithine + L-glutamate = N-acetyl-L-glutamate + L-ornithine. It carries out the reaction L-glutamate + acetyl-CoA = N-acetyl-L-glutamate + CoA + H(+). It participates in amino-acid biosynthesis; L-arginine biosynthesis; L-ornithine and N-acetyl-L-glutamate from L-glutamate and N(2)-acetyl-L-ornithine (cyclic): step 1/1. The protein operates within amino-acid biosynthesis; L-arginine biosynthesis; N(2)-acetyl-L-ornithine from L-glutamate: step 1/4. Functionally, catalyzes two activities which are involved in the cyclic version of arginine biosynthesis: the synthesis of N-acetylglutamate from glutamate and acetyl-CoA as the acetyl donor, and of ornithine by transacetylation between N(2)-acetylornithine and glutamate. The polypeptide is Arginine biosynthesis bifunctional protein ArgJ (Geobacter sulfurreducens (strain ATCC 51573 / DSM 12127 / PCA)).